A 2961-amino-acid polypeptide reads, in one-letter code: Zinc finger ZZ-type and EF-hand domain-containing protein 1 (2961 aa).

The disordered stretch occupies residues 1–41; it reads MGNAPSHSSEDEAAAAGGEGWGPHQDWAAVSGTTPGPGVAA. Glycine 2 carries the N-myristoyl glycine lipid modification. Positions 111 to 146 constitute an EF-hand domain; the sequence is CSSEQFEEAFAQFDAEGDGTVDAENMLEALKNSSGA. Residues 226–405 enclose the DOC domain; it reads LVQKEKESPG…AIWYWSLLTS (180 aa). 4 positions are modified to phosphoserine: serine 240, serine 1475, serine 1488, and serine 1509. The interval 1446–1531 is disordered; that stretch reads TADETSHLQP…PTRRPPFTRG (86 aa). Residues 1485 to 1502 show a composition bias toward polar residues; it reads GDQSPGLGTQPKLPSSSG. Threonine 1512 is modified (phosphothreonine). A compositionally biased stretch (low complexity) spans 1516 to 1531; sequence PLSPSTPTRRPPFTRG. Serine 1518 carries the post-translational modification Phosphoserine. 2 positions are modified to phosphothreonine: threonine 1521 and threonine 1523. 2 positions are modified to phosphoserine: serine 1537 and serine 1540. 2 consecutive ZZ-type zinc fingers follow at residues 1778 to 1833 and 1827 to 1882; these read NVDI…FTCD and NMEF…MVTI. Zn(2+) contacts are provided by cysteine 1783, cysteine 1786, cysteine 1797, cysteine 1800, cysteine 1806, cysteine 1809, histidine 1819, histidine 1823, cysteine 1832, cysteine 1835, cysteine 1846, cysteine 1849, cysteine 1855, cysteine 1858, histidine 1868, and histidine 1872. Disordered regions lie at residues 1994-2078 and 2426-2455; these read AVQG…PSPE and LELDERGDREEEVERPVSSPGDPEQKKLDP. Over residues 2009–2027 the composition is skewed to basic and acidic residues; it reads AVHEEIRPVDFKQRNKADK. Positions 2033–2043 are enriched in polar residues; the sequence is KDPSCQTQISD. Residues 2426–2440 are compositionally biased toward basic and acidic residues; it reads LELDERGDREEEVER. Serine 2444 is subject to Phosphoserine. Position 2667 is an N6-acetyllysine (lysine 2667).

Interacts with KLF6 and KLF9. Interacts via (ZZ-type 2 zinc finger) with histone H3 trimethylated at 'Lys-4' (H3K4me3) and histone H3 acetylated at 'Lys-4' (H3K4ac). In terms of tissue distribution, expressed at low levels in cerebellum.

In terms of biological role, histone H3 reader which may act as a transcriptional coactivator for KLF6 and KLF9 transcription factors. This is Zinc finger ZZ-type and EF-hand domain-containing protein 1 from Homo sapiens (Human).